A 902-amino-acid polypeptide reads, in one-letter code: 4-hydroxyphenylacetate decarboxylase glycyl radical subunit (902 aa).

One can recognise a PFL domain in the interval 38–774 (KRAEDLLDVY…ATLATPDGRL (737 aa)). Residues serine 348 and cysteine 507 each coordinate 4-hydroxyphenylacetate. The active-site Cysteine radical intermediate is cysteine 507. Glutamate 509 functions as the Proton donor in the catalytic mechanism. 2 residues coordinate 4-hydroxyphenylacetate: histidine 540 and glutamate 641. The Glycine radical domain maps to 782–902 (GSVSAYAGTD…VIARTEYEGV (121 aa)). Glycine 877 carries the post-translational modification Glycine radical.

Belongs to the glycyl radical enzyme (GRE) family. HPAD subfamily. In terms of assembly, heterooctamer consisting of 4 large (HpdB) subunits and 4 small (HpdC) subunits. Also forms a catalytically inactive homodimer. Phosphorylated on serine. Phosphorylation may trigger the formation of the active heterooctamers and thereby regulates enzyme activity. In terms of processing, requires the activating protein HpdA to generate the key active site glycyl radical that is involved in catalysis.

It catalyses the reaction 4-hydroxyphenylacetate + H(+) = 4-methylphenol + CO2. The catalysed reaction is 3,4-dihydroxyphenylacetate + H(+) = 4-methylcatechol + CO2. It carries out the reaction 2-hydroxy-2-(4-hydroxyphenyl)acetate + H(+) = 4-hydroxybenzyl alcohol + CO2. Its activity is regulated as follows. Enzyme activity catalyzed by the HPA decarboxylase complex is rapidly and irreversibly inactivated by oxygen. Competitively inhibited by p-hydroxyphenylacetamide. Not inhibited by m- or o-hydroxyphenyl-acetate, p-hydroxybenzoate or p-hydroxyphenylpropionate. Its function is as follows. Glycyl radical subunit of the HPA decarboxylase that decarboxylates phenylacetates with a hydroxyl group in the p-position. Active toward 4-hydroxyphenylacetate, 3,4-dihydroxyphenylacetate and to a lesser extent p-hydroxymandelate (2-hydroxy-2-(4-hydroxyphenyl)acetate), forming 4-methylphenol, 4-methylcatechol and 4-hydroxybenzylalcohol, respectively. Is likely involved in the catabolism of aromatic amino acids such as tyrosine fermentation. 4-methylphenol (p-cresol) formation provides metabolic toxicity, which may benefit the pathogen C.difficile by suppression of the endogenous gastrointestinal microflora, allowing the development of gastrointestinal infections. The large subunit is the catalytic subunit that binds the substrate. This Clostridioides difficile (Peptoclostridium difficile) protein is 4-hydroxyphenylacetate decarboxylase glycyl radical subunit.